A 380-amino-acid polypeptide reads, in one-letter code: Probable G-protein coupled receptor 132 (380 aa).

The Extracellular segment spans residues 1 to 45; that stretch reads MCPMLLKNGYNGNATPVTTTAPWASLGLSAKTCNNVSFEESRIVL. N-linked (GlcNAc...) asparagine glycosylation occurs at Asn-35. A helical transmembrane segment spans residues 46–68; sequence VVVYSAVCTLGVPANCLTAWLAL. Topologically, residues 69–79 are cytoplasmic; that stretch reads LQVLQGNVLAV. Residues 80 to 102 traverse the membrane as a helical segment; sequence YLLCLALCELLYTGTLPLWVIYI. Residues 103-116 are Extracellular-facing; it reads RNQHRWTLGLLACK. Residues Cys-115 and Cys-186 are joined by a disulfide bond. Residues 117–138 traverse the membrane as a helical segment; it reads VTAYIFFCNIYVSILFLCCISC. Over 139 to 158 the chain is Cytoplasmic; it reads DRFVAVVYALESRGRRRRRT. Residues 159 to 178 traverse the membrane as a helical segment; that stretch reads AILISACIFILVGIVHYPVF. Topologically, residues 179-197 are extracellular; sequence QTEDKETCFDMLQMDSRIA. Residues 198 to 220 form a helical membrane-spanning segment; it reads GYYYARFTVGFAIPLSIIAFTNH. Residues 221–246 lie on the Cytoplasmic side of the membrane; that stretch reads RIFRSIKQSMGLSAAQKAKVKHSAIA. Residues 247–269 form a helical membrane-spanning segment; sequence VVVIFLVCFAPYHLVLLVKAAAF. Over 270–288 the chain is Extracellular; it reads SYYRGDRNAMCGLEERLYT. A helical membrane pass occupies residues 289 to 311; sequence ASVVFLCLSTVNGVADPIIYVLA. The Cytoplasmic segment spans residues 312 to 380; the sequence is TDHSRQEVSR…PAKRLIEESC (69 aa).

This sequence belongs to the G-protein coupled receptor 1 family. In terms of tissue distribution, highly expressed in macrophages and hematopoietic tissues rich in lymphocytes, like spleen and thymus. Weakly expressed in heart and lung. In atherosclerotic plaques, expression is observed around the lipid core and at the shoulder region.

It is found in the cell membrane. Functionally, may be a receptor for oxidized free fatty acids derived from linoleic and arachidonic acids such as 9-hydroxyoctadecadienoic acid (9-HODE). Activates a G alpha protein, most likely G alpha(q). May be involved in apoptosis. Functions at the G2/M checkpoint to delay mitosis. May function as a sensor that monitors the oxidative states and mediates appropriate cellular responses such as secretion of paracrine signals and attenuation of proliferation. May mediate ths accumulation of intracellular inositol phosphates at acidic pH through proton-sensing activity. This Homo sapiens (Human) protein is Probable G-protein coupled receptor 132 (GPR132).